Reading from the N-terminus, the 590-residue chain is tRNA-guanine(15) transglycosylase (590 aa).

Residue Asp-90 is the Nucleophile of the active site. Asp-125 contributes to the substrate binding site. Zn(2+) is bound by residues Cys-278, Cys-280, and Cys-283. The PUA domain maps to 502 to 577 (KGRVVVKGLF…HPFIIIRRHV (76 aa)).

Belongs to the archaeosine tRNA-ribosyltransferase family. Zn(2+) is required as a cofactor.

It catalyses the reaction guanosine(15) in tRNA + 7-cyano-7-deazaguanine = 7-cyano-7-carbaguanosine(15) in tRNA + guanine. The protein operates within tRNA modification; archaeosine-tRNA biosynthesis. In terms of biological role, exchanges the guanine residue with 7-cyano-7-deazaguanine (preQ0) at position 15 in the dihydrouridine loop (D-loop) of archaeal tRNAs. The chain is tRNA-guanine(15) transglycosylase from Korarchaeum cryptofilum (strain OPF8).